Reading from the N-terminus, the 448-residue chain is Methylenetetrahydrofolate--tRNA-(uracil-5-)-methyltransferase TrmFO (448 aa).

13 to 18 (GAGLAG) provides a ligand contact to FAD.

The protein belongs to the MnmG family. TrmFO subfamily. It depends on FAD as a cofactor.

Its subcellular location is the cytoplasm. The catalysed reaction is uridine(54) in tRNA + (6R)-5,10-methylene-5,6,7,8-tetrahydrofolate + NADH + H(+) = 5-methyluridine(54) in tRNA + (6S)-5,6,7,8-tetrahydrofolate + NAD(+). It catalyses the reaction uridine(54) in tRNA + (6R)-5,10-methylene-5,6,7,8-tetrahydrofolate + NADPH + H(+) = 5-methyluridine(54) in tRNA + (6S)-5,6,7,8-tetrahydrofolate + NADP(+). Catalyzes the folate-dependent formation of 5-methyl-uridine at position 54 (M-5-U54) in all tRNAs. This chain is Methylenetetrahydrofolate--tRNA-(uracil-5-)-methyltransferase TrmFO, found in Streptococcus pyogenes serotype M2 (strain MGAS10270).